A 566-amino-acid chain; its full sequence is Pyrophosphate--fructose 6-phosphate 1-phosphotransferase subunit beta 1 (566 aa).

Phosphoserine is present on S16. Residue G105 coordinates diphosphate. D199 serves as a coordination point for Mg(2+). Substrate-binding positions include 227-229, 266-267, 274-276, E335, and 440-443; these read TID, KY, MGR, and YEGR. Catalysis depends on D229, which acts as the Proton acceptor.

Belongs to the phosphofructokinase type A (PFKA) family. PPi-dependent PFK group II subfamily. Clade 'Long' sub-subfamily. As to quaternary structure, tetramer of two alpha (regulatory) and two beta (catalytic) chains. Requires Mg(2+) as cofactor.

The protein localises to the cytoplasm. The catalysed reaction is beta-D-fructose 6-phosphate + diphosphate = beta-D-fructose 1,6-bisphosphate + phosphate + H(+). It functions in the pathway carbohydrate degradation; glycolysis; D-glyceraldehyde 3-phosphate and glycerone phosphate from D-glucose: step 3/4. Allosterically activated by fructose 2,6-bisphosphate. Its function is as follows. Catalytic subunit of pyrophosphate--fructose 6-phosphate 1-phosphotransferase. Catalyzes the phosphorylation of D-fructose 6-phosphate, the first committing step of glycolysis. Uses inorganic phosphate (PPi) as phosphoryl donor instead of ATP like common ATP-dependent phosphofructokinases (ATP-PFKs), which renders the reaction reversible, and can thus function both in glycolysis and gluconeogenesis. The protein is Pyrophosphate--fructose 6-phosphate 1-phosphotransferase subunit beta 1 of Arabidopsis thaliana (Mouse-ear cress).